We begin with the raw amino-acid sequence, 100 residues long: UPF0248 protein APE_0939 (100 aa).

It belongs to the UPF0248 family.

This chain is UPF0248 protein APE_0939, found in Aeropyrum pernix (strain ATCC 700893 / DSM 11879 / JCM 9820 / NBRC 100138 / K1).